The chain runs to 356 residues: S-adenosylmethionine:tRNA ribosyltransferase-isomerase (356 aa).

This sequence belongs to the QueA family. As to quaternary structure, monomer.

It localises to the cytoplasm. The catalysed reaction is 7-aminomethyl-7-carbaguanosine(34) in tRNA + S-adenosyl-L-methionine = epoxyqueuosine(34) in tRNA + adenine + L-methionine + 2 H(+). The protein operates within tRNA modification; tRNA-queuosine biosynthesis. Transfers and isomerizes the ribose moiety from AdoMet to the 7-aminomethyl group of 7-deazaguanine (preQ1-tRNA) to give epoxyqueuosine (oQ-tRNA). The sequence is that of S-adenosylmethionine:tRNA ribosyltransferase-isomerase from Salmonella arizonae (strain ATCC BAA-731 / CDC346-86 / RSK2980).